The primary structure comprises 452 residues: Phosphatidylinositol N-acetylglucosaminyltransferase GPI3 subunit (452 aa).

Residues Leu-407 to Pro-427 traverse the membrane as a helical segment.

This sequence belongs to the glycosyltransferase group 1 family. As to quaternary structure, component of the phosphatidylinositol N-acetylglucosaminyltransferase complex composed of at least GPI1, GPI2, GPI3, GPI15, GPI19 and ERI1.

Its subcellular location is the endoplasmic reticulum membrane. It carries out the reaction a 1,2-diacyl-sn-glycero-3-phospho-(1D-myo-inositol) + UDP-N-acetyl-alpha-D-glucosamine = a 6-(N-acetyl-alpha-D-glucosaminyl)-1-(1,2-diacyl-sn-glycero-3-phospho)-1D-myo-inositol + UDP + H(+). It participates in glycolipid biosynthesis; glycosylphosphatidylinositol-anchor biosynthesis. With respect to regulation, inhibited by Ras, probably via the interaction between RAS2 and ERI1. Catalytic subunit in the complex catalyzing the transfer of N-acetylglucosamine from UDP-N-acetylglucosamine to phosphatidylinositol, the first step of GPI biosynthesis. The sequence is that of Phosphatidylinositol N-acetylglucosaminyltransferase GPI3 subunit (SPT14) from Saccharomyces cerevisiae (strain RM11-1a) (Baker's yeast).